Reading from the N-terminus, the 251-residue chain is Transmembrane ascorbate-dependent reductase CYB561 (251 aa).

M1 bears the N-acetylmethionine mark. The Cytoplasmic portion of the chain corresponds to 1–16 (MEGGAAAATPTALPYY). A helical transmembrane segment spans residues 17 to 37 (VAFSQLLGLTLVAMTGAWLGL). One can recognise a Cytochrome b561 domain in the interval 19-220 (FSQLLGLTLV…FGGAVLYILT (202 aa)). The Vesicular portion of the chain corresponds to 38-51 (YRGGIAWESDLQFN). Residues 52 to 72 (AHPLCMVIGLIFLQGNALLVY) form a helical membrane-spanning segment. 3 residues coordinate heme b: H53, R73, and K80. The Cytoplasmic segment spans residues 73–85 (RVFRNEAKRTTKV). K80 and K84 together coordinate L-ascorbate. A helical membrane pass occupies residues 86-106 (LHGLLHIFALVIALVGLVAVF). Heme b-binding positions include H87, 116–119 (DLYS), and H121. Residues 107-124 (DYHRKKGYADLYSLHSWC) are Vesicular-facing. Residues 125-145 (GILVFVLYFVQWLVGFSFFLF) form a helical membrane-spanning segment. Residues 146–158 (PGASFSLRSRYRP) lie on the Cytoplasmic side of the membrane. R153 is an L-ascorbate binding site. Residues 159 to 179 (QHIFFGATIFLLSVGTALLGL) traverse the membrane as a helical segment. 2 residues coordinate heme b: H160 and E181. Residues 180-198 (KEALLFNLGGKYSAFEPEG) are Vesicular-facing. Residues 199–219 (VLANVLGLLLACFGGAVLYIL) form a helical membrane-spanning segment. Residues 220 to 251 (TRADWKRPSQAEEQALSMDFKTLTEGDSPGSQ) lie on the Cytoplasmic side of the membrane. K225 is a heme b binding site. Position 247 is a phosphoserine (S247).

Requires heme b as cofactor. Expressed in many tissues, in particular the brain especially in the cortex and hippocampus.

The protein localises to the cytoplasmic vesicle. It localises to the secretory vesicle. The protein resides in the chromaffin granule membrane. The catalysed reaction is monodehydro-L-ascorbate radical(out) + L-ascorbate(in) = monodehydro-L-ascorbate radical(in) + L-ascorbate(out). Functionally, transmembrane reductase that uses ascorbate as an electron donor in the cytoplasm and transfers electrons across membranes to reduce monodehydro-L-ascorbate radical in the lumen of secretory vesicles. It is therefore involved the regeneration and homeostasis within secretory vesicles of ascorbate which in turn provides reducing equivalents needed to support the activity of intravesicular enzymes. The chain is Transmembrane ascorbate-dependent reductase CYB561 from Homo sapiens (Human).